We begin with the raw amino-acid sequence, 215 residues long: Uridine kinase (215 aa).

Residue 16–23 participates in ATP binding; sequence GASASGKS.

This sequence belongs to the uridine kinase family.

The protein localises to the cytoplasm. It carries out the reaction uridine + ATP = UMP + ADP + H(+). The enzyme catalyses cytidine + ATP = CMP + ADP + H(+). Its pathway is pyrimidine metabolism; CTP biosynthesis via salvage pathway; CTP from cytidine: step 1/3. It functions in the pathway pyrimidine metabolism; UMP biosynthesis via salvage pathway; UMP from uridine: step 1/1. In Aliivibrio salmonicida (strain LFI1238) (Vibrio salmonicida (strain LFI1238)), this protein is Uridine kinase.